A 252-amino-acid chain; its full sequence is MRILVSNDDGYNAPGLEALVEALSDLGELTVVAPETNHSGASNSLTLNRPLSVRQAANGFLYVNGTPTDCVHVALTGLMDTRPDLVVSGINNGANLGDDTLYSGTVAAASEAHLFGIPAIAFSLVDKGWEHLESAARAARRIVERQIAAPLGVPALLNVNIPNRRYEDLRGVRVTRLGKRHPAEPVVRTTTPYGDTVYWIGPVGLAADATPGTDFHAIADGAVSLTPLRLDLTQYAQLEQLGQWADPLCANL.

A divalent metal cation-binding residues include aspartate 8, aspartate 9, serine 39, and asparagine 91.

The protein belongs to the SurE nucleotidase family. Requires a divalent metal cation as cofactor.

Its subcellular location is the cytoplasm. The catalysed reaction is a ribonucleoside 5'-phosphate + H2O = a ribonucleoside + phosphate. In terms of biological role, nucleotidase that shows phosphatase activity on nucleoside 5'-monophosphates. This chain is 5'-nucleotidase SurE, found in Bordetella avium (strain 197N).